The following is a 515-amino-acid chain: Protein FAM98A (515 aa).

Disordered stretches follow at residues 297–410 (VLMG…GYHG) and 432–515 (SGYQ…HYTS). Over residues 302-311 (VPDRGGRPNE) the composition is skewed to basic and acidic residues. Residues 382 to 394 (WTDGGSGSGGGYQ) show a composition bias toward gly residues. A compositionally biased stretch (basic and acidic residues) spans 444–456 (RYQDGGHHGERGS). Over residues 457-481 (GRGGRGGRGGRGGRGSQGGGWGGRG) the composition is skewed to gly residues. Residues 485–501 (YHQGGQFEQHFQHGGYQ) show a composition bias toward low complexity. Polar residues predominate over residues 502–515 (YSHSGFGQGRHYTS).

It belongs to the FAM98 family. As to quaternary structure, interacts (via N- and C-terminus) with DDX1. Interacts (via N- and C-terminus) with C14orf166. Interacts with FAM98B. Interacts with PLEKHM1 (via N- and C-terminus).

Its function is as follows. Positively stimulates PRMT1-induced protein arginine methylation. Involved in skeletal homeostasis. Positively regulates lysosome peripheral distribution and ruffled border formation in osteoclasts. The chain is Protein FAM98A from Mus musculus (Mouse).